Here is a 145-residue protein sequence, read N- to C-terminus: Basic phospholipase A2 cPt10 (145 aa).

The signal sequence occupies residues 1–21 (MYPAHLLVLLAVCVSLLGASA). A propeptide spanning residues 22–27 (IPPLPL) is cleaved from the precursor. Disulfide bonds link C38–C98, C54–C144, C56–C72, C71–C125, C78–C118, C87–C111, and C105–C116. Ca(2+)-binding residues include Y55, G57, and G59. H75 is a catalytic residue. D76 serves as a coordination point for Ca(2+). The active site involves D119.

It belongs to the phospholipase A2 family. Group I subfamily. D49 sub-subfamily. It depends on Ca(2+) as a cofactor. Expressed by the venom gland.

It is found in the secreted. It carries out the reaction a 1,2-diacyl-sn-glycero-3-phosphocholine + H2O = a 1-acyl-sn-glycero-3-phosphocholine + a fatty acid + H(+). In terms of biological role, PLA2 catalyzes the calcium-dependent hydrolysis of the 2-acyl groups in 3-sn-phosphoglycerides. This Laticauda semifasciata (Black-banded sea krait) protein is Basic phospholipase A2 cPt10.